A 321-amino-acid polypeptide reads, in one-letter code: Glucokinase (321 aa).

8 to 13 (GDVGGT) contributes to the ATP binding site.

It belongs to the bacterial glucokinase family.

The protein localises to the cytoplasm. It carries out the reaction D-glucose + ATP = D-glucose 6-phosphate + ADP + H(+). Not highly important in E.coli as glucose is transported into the cell by the PTS system already as glucose 6-phosphate. In Escherichia coli O139:H28 (strain E24377A / ETEC), this protein is Glucokinase.